We begin with the raw amino-acid sequence, 306 residues long: CRISPR-associated endonuclease Cas1 (306 aa).

Residues Glu143, His210, and Asp223 each coordinate Mn(2+).

Belongs to the CRISPR-associated endonuclease Cas1 family. Homodimer, forms a heterotetramer with a Cas2 homodimer. Mg(2+) serves as cofactor. It depends on Mn(2+) as a cofactor.

Its function is as follows. CRISPR (clustered regularly interspaced short palindromic repeat), is an adaptive immune system that provides protection against mobile genetic elements (viruses, transposable elements and conjugative plasmids). CRISPR clusters contain spacers, sequences complementary to antecedent mobile elements, and target invading nucleic acids. CRISPR clusters are transcribed and processed into CRISPR RNA (crRNA). Acts as a dsDNA endonuclease. Involved in the integration of spacer DNA into the CRISPR cassette. The chain is CRISPR-associated endonuclease Cas1 from Geobacter sulfurreducens (strain ATCC 51573 / DSM 12127 / PCA).